Reading from the N-terminus, the 214-residue chain is Holliday junction branch migration complex subunit RuvA (214 aa).

The interval 1-63 (MISFLRGPVA…EDSMTLYGFA (63 aa)) is domain I. The segment at 64 to 139 (DPDEREVFEI…KLVPHGTVNG (76 aa)) is domain II. The segment at 139 to 143 (GAPAS) is flexible linker. Residues 144 to 214 (PSAQWKPQVV…SAGRQVTARG (71 aa)) form a domain III region.

It belongs to the RuvA family. As to quaternary structure, homotetramer. Forms an RuvA(8)-RuvB(12)-Holliday junction (HJ) complex. HJ DNA is sandwiched between 2 RuvA tetramers; dsDNA enters through RuvA and exits via RuvB. An RuvB hexamer assembles on each DNA strand where it exits the tetramer. Each RuvB hexamer is contacted by two RuvA subunits (via domain III) on 2 adjacent RuvB subunits; this complex drives branch migration. In the full resolvosome a probable DNA-RuvA(4)-RuvB(12)-RuvC(2) complex forms which resolves the HJ.

The protein localises to the cytoplasm. In terms of biological role, the RuvA-RuvB-RuvC complex processes Holliday junction (HJ) DNA during genetic recombination and DNA repair, while the RuvA-RuvB complex plays an important role in the rescue of blocked DNA replication forks via replication fork reversal (RFR). RuvA specifically binds to HJ cruciform DNA, conferring on it an open structure. The RuvB hexamer acts as an ATP-dependent pump, pulling dsDNA into and through the RuvAB complex. HJ branch migration allows RuvC to scan DNA until it finds its consensus sequence, where it cleaves and resolves the cruciform DNA. This chain is Holliday junction branch migration complex subunit RuvA, found in Renibacterium salmoninarum (strain ATCC 33209 / DSM 20767 / JCM 11484 / NBRC 15589 / NCIMB 2235).